A 168-amino-acid chain; its full sequence is 3-isopropylmalate dehydratase small subunit (168 aa).

It belongs to the LeuD family. LeuD type 2 subfamily. In terms of assembly, heterodimer of LeuC and LeuD.

It carries out the reaction (2R,3S)-3-isopropylmalate = (2S)-2-isopropylmalate. The protein operates within amino-acid biosynthesis; L-leucine biosynthesis; L-leucine from 3-methyl-2-oxobutanoate: step 2/4. Functionally, catalyzes the isomerization between 2-isopropylmalate and 3-isopropylmalate, via the formation of 2-isopropylmaleate. This chain is 3-isopropylmalate dehydratase small subunit, found in Thermodesulfovibrio yellowstonii (strain ATCC 51303 / DSM 11347 / YP87).